Here is a 30-residue protein sequence, read N- to C-terminus: Cyclotide hyen-F (30 aa).

The cyclopeptide (Gly-Asn) cross-link spans 1-30 (GLPCGESCVYIPCISTVLGCSCSNKVCYRN). Cystine bridges form between C4/C20, C8/C22, and C13/C27.

Post-translationally, this is a cyclic peptide. Detected in seeds (at protein level).

Probably participates in a plant defense mechanism. The chain is Cyclotide hyen-F from Pigea enneasperma (Spade flower).